A 209-amino-acid chain; its full sequence is Protein TIC 20-v, chloroplastic (209 aa).

A chloroplast-targeting transit peptide spans 1-49; the sequence is MAIISQFFAPLPSLTGTLTLTGRSFLPLNLDTQFPKPRLSRDRAATLVL. Transmembrane regions (helical) follow at residues 63 to 83, 103 to 123, 132 to 152, and 173 to 193; these read IISA…GKFI, AFKS…FVVV, VRFN…PDLL, and TVFL…LFGL.

This sequence belongs to the Tic20 family. In terms of assembly, part of the Tic complex. As to expression, expressed in leaves, siliques and roots.

The protein localises to the plastid. It is found in the chloroplast inner membrane. Functionally, may be involved in protein precursor import into chloroplasts. Not redundant with TIC20-I, TIC20-II or TIC20-IV. This Arabidopsis thaliana (Mouse-ear cress) protein is Protein TIC 20-v, chloroplastic (TIC20-V).